A 156-amino-acid chain; its full sequence is MTKMNVESFNLDHTKVVAPFIRLAGTMEGLNGDVIHKYDIRFKQPNKEHMDMPGLHSLEHLMAENIRNHSDKVVDLSPMGCQTGFYVSFINHDNYDDVLNIVEATLNDVLNATEVPACNEVQCGWAASHSLEGAKTIAQAFLDKRNEWHDVFGTGK.

Fe cation-binding residues include H56, H60, and C123.

This sequence belongs to the LuxS family. In terms of assembly, homodimer. The cofactor is Fe cation.

It catalyses the reaction S-(5-deoxy-D-ribos-5-yl)-L-homocysteine = (S)-4,5-dihydroxypentane-2,3-dione + L-homocysteine. In terms of biological role, involved in the synthesis of autoinducer 2 (AI-2) which is secreted by bacteria and is used to communicate both the cell density and the metabolic potential of the environment. The regulation of gene expression in response to changes in cell density is called quorum sensing. Catalyzes the transformation of S-ribosylhomocysteine (RHC) to homocysteine (HC) and 4,5-dihydroxy-2,3-pentadione (DPD). This is S-ribosylhomocysteine lyase from Staphylococcus aureus (strain Mu3 / ATCC 700698).